A 668-amino-acid polypeptide reads, in one-letter code: UvrABC system protein B (668 aa).

The region spanning 25–176 is the Helicase ATP-binding domain; the sequence is THLQSGHSRQ…DQRQLLRNLA (152 aa). 38–45 contributes to the ATP binding site; the sequence is GATGTGKT. Residues 91–114 carry the Beta-hairpin motif; it reads YYDYYQPEAYIPVTDTFIEKTASI. Positions 429–591 constitute a Helicase C-terminal domain; it reads QVDDLLAEIQ…ITPQPVKKGS (163 aa). Positions 626–661 constitute a UVR domain; sequence PELITQLEAQMKEAAKNLEFEEAAKYRDRIKNLRSK.

This sequence belongs to the UvrB family. In terms of assembly, forms a heterotetramer with UvrA during the search for lesions. Interacts with UvrC in an incision complex.

The protein resides in the cytoplasm. In terms of biological role, the UvrABC repair system catalyzes the recognition and processing of DNA lesions. A damage recognition complex composed of 2 UvrA and 2 UvrB subunits scans DNA for abnormalities. Upon binding of the UvrA(2)B(2) complex to a putative damaged site, the DNA wraps around one UvrB monomer. DNA wrap is dependent on ATP binding by UvrB and probably causes local melting of the DNA helix, facilitating insertion of UvrB beta-hairpin between the DNA strands. Then UvrB probes one DNA strand for the presence of a lesion. If a lesion is found the UvrA subunits dissociate and the UvrB-DNA preincision complex is formed. This complex is subsequently bound by UvrC and the second UvrB is released. If no lesion is found, the DNA wraps around the other UvrB subunit that will check the other stand for damage. This chain is UvrABC system protein B, found in Acaryochloris marina (strain MBIC 11017).